Reading from the N-terminus, the 435-residue chain is Enolase (435 aa).

Gln-163 is a (2R)-2-phosphoglycerate binding site. Glu-205 serves as the catalytic Proton donor. Mg(2+) contacts are provided by Asp-243, Glu-292, and Asp-319. Positions 344, 373, 374, and 395 each coordinate (2R)-2-phosphoglycerate. Lys-344 serves as the catalytic Proton acceptor.

It belongs to the enolase family. In terms of assembly, homooctamer, a tetramer of homodimers. It depends on Mg(2+) as a cofactor.

It localises to the cytoplasm. Its subcellular location is the secreted. It is found in the cell surface. The protein resides in the cell wall. The catalysed reaction is (2R)-2-phosphoglycerate = phosphoenolpyruvate + H2O. The protein operates within carbohydrate degradation; glycolysis; pyruvate from D-glyceraldehyde 3-phosphate: step 4/5. Functionally, catalyzes the reversible conversion of 2-phosphoglycerate (2-PG) into phosphoenolpyruvate (PEP). It is essential for the degradation of carbohydrates via glycolysis. In terms of biological role, 'Moonlights' as a plasminogen receptor. Binds plasminogen and more weakly plasmin when expressed on the bacterial cell surface; probably has more than one plasmin(ogen) binding site, may bind via Lys residues. Plasminogen binding potentially allows the bacterium to acquire surface-associated proteolytic activity, which in turn contributes to tissue invasion and virulence. In Streptococcus pyogenes serotype M6 (strain ATCC BAA-946 / MGAS10394), this protein is Enolase.